Consider the following 289-residue polypeptide: Glyoxylate/succinic semialdehyde reductase 1 (289 aa).

Position 1 is an N-acetylmethionine (Met-1). NADP(+)-binding positions include Gly-4–Asn-18 and Thr-95. The active site involves Lys-170. NADP(+) is bound at residue Lys-238.

The protein belongs to the HIBADH-related family. NP60 subfamily.

Its subcellular location is the cytoplasm. It localises to the cytosol. It catalyses the reaction glycolate + NADP(+) = glyoxylate + NADPH + H(+). It carries out the reaction 4-hydroxybutanoate + NADP(+) = succinate semialdehyde + NADPH + H(+). Its activity is regulated as follows. The ratio of NADPH/NADP(+) may regulate enzymatic activity. Its function is as follows. Catalyzes the NADPH-dependent reduction of glyoxylate to glycolate as well as succinic semialdehyde (SSA) to gamma-hydroxybutyrate in vitro. May function in redox homeostasis and play a role in oxidative stress tolerance by detoxifying glyoxylate and SSA generated in glycolate metabolism and GABA metabolism, respectively. This is Glyoxylate/succinic semialdehyde reductase 1 (GLYR1) from Arabidopsis thaliana (Mouse-ear cress).